Reading from the N-terminus, the 340-residue chain is MMHQMLNKKDSATHSTLPYLNTSISWGVVPTDSVANRRGSAESLSLKVDSRPGHIQTTKQISFQDQDSSSTQSTGQSYTEVASSGDDNPSRQISFSAKSGSEITQRKGFASNPKQGSMTGFPNIHFAPAQANFSFHYADPHYGGLLAATYLPQAPTCNPQMVSMIPGRVPLPAELTETDPVFVNAKQYHAIMRRRQQRAKLEAQNKLIRARKPYLHESRHVHALKRPRGSGGRFLNTKKLLQESEQAAAREQEQDKLGQQVNRKTNMSRFEAHMLQNNKDRSSTTSGSDITSVSDGADIFGHTEFQFSGFPTPINRAMLVHGQSNDMHGGGDMHHFSVHI.

The segment at 43–116 is disordered; sequence SLSLKVDSRP…KGFASNPKQG (74 aa). The span at 60–77 shows a compositional bias: low complexity; sequence QISFQDQDSSSTQSTGQS. Positions 78–103 are enriched in polar residues; that stretch reads YTEVASSGDDNPSRQISFSAKSGSEI. Positions 182–205 match the Subunit association domain (SAD) motif; that stretch reads FVNAKQYHAIMRRRQQRAKLEAQN. The NFYA/HAP2-type DNA-binding region spans 212–237; the sequence is KPYLHESRHVHALKRPRGSGGRFLNT.

It belongs to the NFYA/HAP2 subunit family. As to quaternary structure, heterotrimeric transcription factor composed of three components, NF-YA, NF-YB and NF-YC. NF-YB and NF-YC must interact and dimerize for NF-YA association and DNA binding. In terms of tissue distribution, ubiquitous.

It localises to the nucleus. Functionally, stimulates the transcription of various genes by recognizing and binding to a CCAAT motif in promoters. The sequence is that of Nuclear transcription factor Y subunit A-3 (NFYA3) from Arabidopsis thaliana (Mouse-ear cress).